We begin with the raw amino-acid sequence, 506 residues long: Tyrosine-protein phosphatase non-receptor type substrate 1 (506 aa).

A signal peptide spans 1 to 29; the sequence is MEPARPAPGRLRPLLCLLLAASNAWTGTA. In terms of domain architecture, Ig-like V-type spans 30–145; the sequence is GDGELQVIQP…SGPGTHLTVS (116 aa). Over 30–371 the chain is Extracellular; sequence GDGELQVIQP…PGPNDSNWTS (342 aa). Cysteines 55 and 121 form a disulfide. N-linked (GlcNAc...) asparagine glycosylation occurs at N92. A disordered region spans residues 136-159; the sequence is SGPGTHLTVSAKPSPPVLSGPTVR. Ig-like C1-type domains follow at residues 148-248 and 255-348; these read PSPP…ANLS and PTLE…HTLE. Residues N167, N179, N204, N210, N246, N270, N292, N311, N319, N344, N365, and N368 are each glycosylated (N-linked (GlcNAc...) asparagine). C170 and C228 are disulfide-bonded. The cysteines at positions 273 and 331 are disulfide-linked. The tract at residues 344–364 is disordered; it reads NHTLEVSAPQKDQDTGQTPGP. Residues 372 to 392 traverse the membrane as a helical segment; the sequence is IFIVVGVVCALLVALLIAALY. Over 393–506 the chain is Cytoplasmic; that stretch reads LLRIRQNKAK…EYASVQVQRK (114 aa). Residues 402 to 468 form a disordered region; it reads KGSTSSTRLH…QARPPPVSED (67 aa). Basic and acidic residues predominate over residues 409–418; the sequence is RLHEPEKNTR. The segment covering 419–429 has biased composition (polar residues); the sequence is ETTQIQDNNDI. A Phosphotyrosine; by Tyr-kinases modification is found at Y431. The short motif at 432-435 is the SH2-binding element; the sequence is ADLN. An SH3-binding motif is present at residues 441–446; it reads KSTPKA. The span at 444–456 shows a compositional bias: polar residues; that stretch reads PKANEPNNHTEYA. Residues Y455, Y472, and Y498 each carry the phosphotyrosine; by Tyr-kinases modification. 3 short sequence motifs (SH2-binding) span residues 455–458, 472–475, and 498–501; these read YASI, YADL, and YASV. Residues 480-506 form a disordered region; the sequence is LNRTPKQPAPKPEPSYSEYASVQVQRK. Residues 497 to 506 are compositionally biased toward polar residues; it reads EYASVQVQRK.

As to quaternary structure, binds PTPN11 when tyrosine-phosphorylated, except in macrophages, where it primarily binds PTPN6. Binds GRB2 in vitro. Binds JAK2 irrespective of its phosphorylation status and forms a stable complex. Binds SCAP1 and/or SCAP2. The resulting complex recruits FYB1. Binds FGR and PTK2B. Interacts with TRIM2. In terms of processing, phosphorylated on tyrosine residues. As to expression, highly expressed in spleen macrophages. Detected in skin dendritic cells.

Its subcellular location is the membrane. Functionally, immunoglobulin-like cell surface receptor for CD47. Acts as docking protein and induces translocation of PTPN6, PTPN11 and other binding partners from the cytosol to the plasma membrane. Supports adhesion of cerebellar neurons, neurite outgrowth and glial cell attachment. May play a key role in intracellular signaling during synaptogenesis and in synaptic function. Involved in the negative regulation of receptor tyrosine kinase-coupled cellular responses induced by cell adhesion, growth factors or insulin. Mediates negative regulation of phagocytosis, mast cell activation and dendritic cell activation. CD47 binding prevents maturation of immature dendritic cells and inhibits cytokine production by mature dendritic cells. Plays a role in antiviral immunity and limits new world arenavirus infection by decreasing virus internalization. Receptor for THBS1. Interaction with THBS1 stimulates phosphorylation of SIRPA. In response to THBS1, involved in ROS signaling in non-phagocytic cells, stimulating NADPH oxidase-derived ROS production. The protein is Tyrosine-protein phosphatase non-receptor type substrate 1 (SIRPA) of Bos taurus (Bovine).